Reading from the N-terminus, the 60-residue chain is Transcriptional regulator Brz (60 aa).

The C4-type; atypical zinc finger occupies 8 to 52 (CPRCGSDVKMGLPMGATVKSVTAASRQEPTSDTQKVRTVECRNDH).

It belongs to the Brz family.

Activates transcription of bacteriorhodopsin (bop) and phytoene synthase (crtB1). May interact with DNA or RNA via the zinc finger motif. The protein is Transcriptional regulator Brz (brz) of Halobacterium salinarum (strain ATCC 29341 / DSM 671 / R1).